The sequence spans 89 residues: Probable Fe(2+)-trafficking protein (89 aa).

It belongs to the Fe(2+)-trafficking protein family.

Functionally, could be a mediator in iron transactions between iron acquisition and iron-requiring processes, such as synthesis and/or repair of Fe-S clusters in biosynthetic enzymes. In Stenotrophomonas maltophilia (strain K279a), this protein is Probable Fe(2+)-trafficking protein.